The chain runs to 213 residues: uncharacterized protein (213 aa).

In terms of domain architecture, CS spans 2 to 91 (SRHPEVKWAQ…AEAKWWKKLV (90 aa)). The tract at residues 168-213 (GMGGMGGMDEFEDESDDEEEVSKPQDAEKAAEAGKSQESDAKAETS) is disordered. Over residues 176-187 (DEFEDESDDEEE) the composition is skewed to acidic residues. A compositionally biased stretch (basic and acidic residues) spans 188-213 (VSKPQDAEKAAEAGKSQESDAKAETS).

The protein belongs to the p23/wos2 family.

This is an uncharacterized protein from Oryza sativa subsp. japonica (Rice).